Consider the following 1411-residue polypeptide: Zinc finger protein 609 (1411 aa).

8 disordered regions span residues 1 to 26 (MSLS…SGDE), 47 to 190 (QKLE…QPVP), 353 to 484 (PRFC…EPTV), 517 to 659 (AHAH…ARPI), 679 to 963 (ASPG…VIQQ), 1005 to 1125 (YEEQ…RQAE), 1153 to 1221 (KSED…LTQH), and 1270 to 1367 (GSKV…STHH). Phosphoserine is present on residues Ser358, Ser361, and Ser379. Residues 377–401 (PNSNTPVNETATASDSKGTSNSSKT) are compositionally biased toward polar residues. Thr381 bears the Phosphothreonine mark. 6 positions are modified to phosphoserine: Ser413, Ser433, Ser446, Ser452, Ser467, and Ser470. The segment covering 423-437 (ASSTSEDVKASPSSA) has biased composition (polar residues). A Glycyl lysine isopeptide (Lys-Gly) (interchain with G-Cter in SUMO2) cross-link involves residue Lys479. The C2H2-type zinc-finger motif lies at 495 to 520 (IDCPHPNCNKKYKHINGLKYHQAHAH). Positions 519–529 (AHTDDDSKPEA) are enriched in basic and acidic residues. Residue Ser533 is modified to Phosphoserine. Residues 549–563 (NGASVSQKGSLSPAR) are compositionally biased toward polar residues. Phosphoserine occurs at positions 576 and 578. The span at 626–649 (SLERKCMEKEKCKKPSSLKPEKIP) shows a compositional bias: basic and acidic residues. Positions 679-700 (ASPGSSSGLTATVAQAMPNSPQ) are enriched in polar residues. Residues 726–736 (DKKKKDKKKKE) show a composition bias toward basic residues. Ser743 carries the post-translational modification Phosphoserine. Thr746 is subject to Phosphothreonine. Over residues 751-764 (CRAEEGKSPFRESS) the composition is skewed to basic and acidic residues. Residue Ser758 is modified to Phosphoserine. Residue Lys789 forms a Glycyl lysine isopeptide (Lys-Gly) (interchain with G-Cter in SUMO2) linkage. A compositionally biased stretch (polar residues) spans 798-844 (FTDNAPSPSIGGSSRLENTTPTQPLTPLHVVTQNGAEASSVKTNSPA). At Ser804 the chain carries Phosphoserine. At Thr823 the chain carries Phosphothreonine. 3 positions are modified to phosphoserine: Ser842, Ser846, and Ser849. Residues 855–876 (GEGKVDSVKSKDAEQLVKEGAK) show a composition bias toward basic and acidic residues. Over residues 897 to 908 (SYYSPSYAQSSP) the composition is skewed to low complexity. The span at 926-950 (TKRDEEPESIEGKVKNDICEEKKPE) shows a compositional bias: basic and acidic residues. The span at 952–963 (SSSSQQPSVIQQ) shows a compositional bias: low complexity. Positions 1020-1042 (GVDKKAEMGLKEREAALKEEWKQ) are enriched in basic and acidic residues. Residue Ser1055 is modified to Phosphoserine. Residue Lys1061 forms a Glycyl lysine isopeptide (Lys-Gly) (interchain with G-Cter in SUMO2) linkage. Basic and acidic residues-rich tracts occupy residues 1097–1113 (LKVK…EASE), 1153–1187 (KSED…KEST), and 1195–1208 (TSEE…EPRP). A Glycyl lysine isopeptide (Lys-Gly) (interchain with G-Cter in SUMO2) cross-link involves residue Lys1153. Over residues 1286 to 1296 (PSVTCKSSSES) the composition is skewed to polar residues. Residue Lys1297 forms a Glycyl lysine isopeptide (Lys-Gly) (interchain with G-Cter in SUMO2) linkage. The segment covering 1328-1337 (GCGVVGGGGS) has biased composition (gly residues).

Interacts (via N-terminus) with NIPBL. Interacts with INTS13; promoting association with the integrator complex. In terms of tissue distribution, isoform 1: Expressed in myoblasts and myotubes. Isoform 2: Expressed in myoblasts and myotubes, with a preference in undifferentiated myoblasts.

It localises to the nucleus. In terms of biological role, transcription factor, which activates RAG1, and possibly RAG2, transcription. Through the regulation of RAG1/2 expression, may regulate thymocyte maturation. Along with NIPBL and the multiprotein complex Integrator, promotes cortical neuron migration during brain development by regulating the transcription of crucial genes in this process. Preferentially binds promoters containing paused RNA polymerase II. Up-regulates the expression of SEMA3A, NRP1, PLXND1 and GABBR2 genes, among others. Functionally, involved in the regulation of myoblast proliferation during myogenesis. The protein is Zinc finger protein 609 of Homo sapiens (Human).